Consider the following 83-residue polypeptide: MKTSMFLTLTGLVLLFVVCYASESEEKEFPKELLSSIFAADSDFKEEERGCFGYKCDYYKGCCSGYVCSPTWKWCVRPGPGRR.

An N-terminal signal peptide occupies residues Met-1 to Ala-21. The propeptide occupies Ser-22 to Arg-49. Intrachain disulfides connect Cys-51–Cys-63, Cys-56–Cys-68, and Cys-62–Cys-75.

It belongs to the neurotoxin 10 (Hwtx-1) family. 51 (Hntx-8) subfamily. Hntx-8 sub-subfamily. In terms of tissue distribution, expressed by the venom gland.

The protein localises to the secreted. Weakly inhibits 5HT3A receptors and Kv1.3/KCNA3 voltage-gated potassium channels. Agglutinates erythrocytes. The sequence is that of U5-theraphotoxin-Hs1b 1 from Cyriopagopus schmidti (Chinese bird spider).